The primary structure comprises 889 residues: Alanine--tRNA ligase (889 aa).

His-569, His-573, Cys-671, and His-675 together coordinate Zn(2+).

It belongs to the class-II aminoacyl-tRNA synthetase family. Zn(2+) serves as cofactor.

The protein localises to the cytoplasm. The catalysed reaction is tRNA(Ala) + L-alanine + ATP = L-alanyl-tRNA(Ala) + AMP + diphosphate. In terms of biological role, catalyzes the attachment of alanine to tRNA(Ala) in a two-step reaction: alanine is first activated by ATP to form Ala-AMP and then transferred to the acceptor end of tRNA(Ala). Also edits incorrectly charged Ser-tRNA(Ala) and Gly-tRNA(Ala) via its editing domain. This Synechococcus sp. (strain CC9605) protein is Alanine--tRNA ligase.